A 423-amino-acid chain; its full sequence is Glucose-1-phosphate adenylyltransferase 1 (423 aa).

Alpha-D-glucose 1-phosphate-binding positions include Y111, G176, 191–192, and S209; that span reads EK.

The protein belongs to the bacterial/plant glucose-1-phosphate adenylyltransferase family. In terms of assembly, homotetramer.

It carries out the reaction alpha-D-glucose 1-phosphate + ATP + H(+) = ADP-alpha-D-glucose + diphosphate. It functions in the pathway glycan biosynthesis; glycogen biosynthesis. Involved in the biosynthesis of ADP-glucose, a building block required for the elongation reactions to produce glycogen. Catalyzes the reaction between ATP and alpha-D-glucose 1-phosphate (G1P) to produce pyrophosphate and ADP-Glc. The sequence is that of Glucose-1-phosphate adenylyltransferase 1 from Alkalilimnicola ehrlichii (strain ATCC BAA-1101 / DSM 17681 / MLHE-1).